The following is an 888-amino-acid chain: Inactive deaminase YJL070C (888 aa).

The tract at residues 1–42 is disordered; that stretch reads MQAVERRPSLLFDEYQNSVTKPNETKNKEARVLSENDGDVSP. S9 is subject to Phosphoserine. A compositionally biased stretch (basic and acidic residues) spans 23–34; the sequence is NETKNKEARVLS. Phosphoserine is present on residues S41, S178, and S180.

This sequence belongs to the metallo-dependent hydrolases superfamily. Adenosine and AMP deaminases family.

The protein is Inactive deaminase YJL070C of Saccharomyces cerevisiae (strain ATCC 204508 / S288c) (Baker's yeast).